We begin with the raw amino-acid sequence, 267 residues long: Hydroxyethylthiazole kinase (267 aa).

Met-42 is a binding site for substrate. Cys-118 and Thr-162 together coordinate ATP. Gly-189 lines the substrate pocket.

This sequence belongs to the Thz kinase family. Mg(2+) is required as a cofactor.

The enzyme catalyses 5-(2-hydroxyethyl)-4-methylthiazole + ATP = 4-methyl-5-(2-phosphooxyethyl)-thiazole + ADP + H(+). Its pathway is cofactor biosynthesis; thiamine diphosphate biosynthesis; 4-methyl-5-(2-phosphoethyl)-thiazole from 5-(2-hydroxyethyl)-4-methylthiazole: step 1/1. In terms of biological role, catalyzes the phosphorylation of the hydroxyl group of 4-methyl-5-beta-hydroxyethylthiazole (THZ). The sequence is that of Hydroxyethylthiazole kinase from Rubrobacter xylanophilus (strain DSM 9941 / JCM 11954 / NBRC 16129 / PRD-1).